The following is a 464-amino-acid chain: Uronate isomerase (464 aa).

This sequence belongs to the metallo-dependent hydrolases superfamily. Uronate isomerase family.

The catalysed reaction is D-glucuronate = D-fructuronate. The enzyme catalyses aldehydo-D-galacturonate = keto-D-tagaturonate. The protein operates within carbohydrate metabolism; pentose and glucuronate interconversion. In Caldicellulosiruptor saccharolyticus (strain ATCC 43494 / DSM 8903 / Tp8T 6331), this protein is Uronate isomerase.